Reading from the N-terminus, the 105-residue chain is Death-associated protein 1 homolog (105 aa).

A disordered region spans residues A75–K105. Residues H95 to K105 show a composition bias toward polar residues.

It belongs to the DAP-DAPL1 family. Associates with ribosomes; inhibiting translation. Interacts with eiF5a (eif5a and eif5a2); inhibiting translation.

In terms of biological role, ribosome-binding protein involved in ribosome hibernation, a process during which ribosomes are stabilized in an inactive state and preserved from proteasomal degradation. Acts via its association with eiF5a (eif5a and eif5a2) at the polypeptide exit tunnel of the ribosome, preventing mRNA translation. Involved in ribosome hibernation in the mature egg by preventing mRNA translation, leading to ribosome inactivation. Ribosomes, which are produced in large quantities during oogenesis, are stored and translationally repressed in the egg and early embryo. Compared to dap1b, binds and inactivates ribosomes less efficiently. The polypeptide is Death-associated protein 1 homolog (Danio rerio (Zebrafish)).